A 262-amino-acid chain; its full sequence is tRNA pseudouridine synthase A (262 aa).

The active-site Nucleophile is the Asp52. Tyr103 is a substrate binding site.

It belongs to the tRNA pseudouridine synthase TruA family.

The enzyme catalyses uridine(38/39/40) in tRNA = pseudouridine(38/39/40) in tRNA. In terms of biological role, formation of pseudouridine at positions 38, 39 and 40 in the anticodon stem and loop of transfer RNAs. The chain is tRNA pseudouridine synthase A from Methanococcus maripaludis (strain C6 / ATCC BAA-1332).